A 77-amino-acid polypeptide reads, in one-letter code: Chaplin-H (77 aa).

A signal peptide spans methionine 1–alanine 25. The 41-residue stretch at serine 36–asparagine 76 folds into the Chaplin domain. Forms amyloid fibrils in vitro stretches follow at residues glycine 38–asparagine 54 and glycine 57–asparagine 72. Cysteine 56 and cysteine 74 are disulfide-bonded.

The protein belongs to the chaplin family. Short chaplin subfamily. As to quaternary structure, homodimer; disulfide linked. About 10% of ChpH isolated from cell wall forms disulfide-bonded homodimers.

It localises to the cell surface. Its subcellular location is the secreted. The protein localises to the cell wall. It is found in the fimbrium. One of 8 partially redundant surface-active proteins required for efficient formation of aerial mycelium; the short chaplins assemble into a hydrophobic, amyloidal fibrillar surface layer that envelopes and protects aerial hyphae and spores, presumably anchored to the long chaplins. Chaplins have an overlapping function with the surface-active SapB peptide; chaplins are essential on minimal medium while on rich medium both chaplins and SapB are required for efficient aerial hyphae formation. Chaplins are also involved in cell attachment to a hydrophobic surface. Forms amyloid fibrils in vitro probably composed of stacked beta-sheets. A small chaplin extract (ChpD, ChpE, ChpF, ChpG and ChpH) self-assembles into 2 different amyloids; small fibrils at the air-water interface form an amphipathic membrane that resembles spore-surface structures involved in aerial hyphae formation, and hydrophilic fibrils in solution that resemble the fibers that attach cells to a hydrophobic surface. At the air-water interface the hydrophilic surface is in contact with water (probably equivalent to the peptidoglycan layer), while the hydrophobic face is exposed to the air, making the surface of the aerial hyphae hydrophobic. A minimal chaplin strain capable of forming aerial mycelium/hyphae on minimal medium contains ChpC, ChpE and ChpH. The strain also has restored rodlet formation on the hyphae surface. A small chaplin extract applied to a chaplin-deficient strain restores aerial hyphae formation. The small chaplin extract forms an amyloid-like structure similar to that seen on the surface of cells without rodlets (rdlA-rdlB deletions), and is highly surface active, reducing surface tension from 72 to 26 mJ/m(2), which probably allows escape of hyphae from an aqueous environment into air. This Streptomyces coelicolor (strain ATCC BAA-471 / A3(2) / M145) protein is Chaplin-H.